Reading from the N-terminus, the 449-residue chain is Tubulin alpha chain (449 aa).

GTP contacts are provided by Gln-11, Glu-71, Ser-140, Gly-144, Thr-145, Thr-179, Asn-206, and Asn-228. Glu-71 is a Mg(2+) binding site. The active site involves Glu-254.

Belongs to the tubulin family. Dimer of alpha and beta chains. A typical microtubule is a hollow water-filled tube with an outer diameter of 25 nm and an inner diameter of 15 nM. Alpha-beta heterodimers associate head-to-tail to form protofilaments running lengthwise along the microtubule wall with the beta-tubulin subunit facing the microtubule plus end conferring a structural polarity. Microtubules usually have 13 protofilaments but different protofilament numbers can be found in some organisms and specialized cells. The cofactor is Mg(2+).

It is found in the cytoplasm. The protein resides in the cytoskeleton. It carries out the reaction GTP + H2O = GDP + phosphate + H(+). Its function is as follows. Tubulin is the major constituent of microtubules, a cylinder consisting of laterally associated linear protofilaments composed of alpha- and beta-tubulin heterodimers. Microtubules grow by the addition of GTP-tubulin dimers to the microtubule end, where a stabilizing cap forms. Below the cap, tubulin dimers are in GDP-bound state, owing to GTPase activity of alpha-tubulin. The chain is Tubulin alpha chain (TUB1) from Pneumocystis carinii.